A 199-amino-acid chain; its full sequence is Recombination protein RecR (199 aa).

Residues C57–C72 form a C4-type zinc finger. Residues S80–A176 form the Toprim domain.

It belongs to the RecR family.

In terms of biological role, may play a role in DNA repair. It seems to be involved in an RecBC-independent recombinational process of DNA repair. It may act with RecF and RecO. This chain is Recombination protein RecR, found in Ligilactobacillus salivarius (strain UCC118) (Lactobacillus salivarius).